The primary structure comprises 415 residues: Serine hydroxymethyltransferase (415 aa).

Residues L118 and 122 to 124 (GHL) each bind (6S)-5,6,7,8-tetrahydrofolate. At K227 the chain carries N6-(pyridoxal phosphate)lysine.

This sequence belongs to the SHMT family. In terms of assembly, homodimer. Pyridoxal 5'-phosphate serves as cofactor.

Its subcellular location is the cytoplasm. The enzyme catalyses (6R)-5,10-methylene-5,6,7,8-tetrahydrofolate + glycine + H2O = (6S)-5,6,7,8-tetrahydrofolate + L-serine. It functions in the pathway one-carbon metabolism; tetrahydrofolate interconversion. It participates in amino-acid biosynthesis; glycine biosynthesis; glycine from L-serine: step 1/1. Its function is as follows. Catalyzes the reversible interconversion of serine and glycine with tetrahydrofolate (THF) serving as the one-carbon carrier. This reaction serves as the major source of one-carbon groups required for the biosynthesis of purines, thymidylate, methionine, and other important biomolecules. Also exhibits THF-independent aldolase activity toward beta-hydroxyamino acids, producing glycine and aldehydes, via a retro-aldol mechanism. The chain is Serine hydroxymethyltransferase from Elusimicrobium minutum (strain Pei191).